The following is a 306-amino-acid chain: Proteasome subunit beta (306 aa).

The propeptide at 1–67 (MTWPNRDQPA…GLPTDAVPHG (67 aa)) is removed in mature form; by autocatalysis. Residue Thr-68 is the Nucleophile of the active site.

It belongs to the peptidase T1B family. As to quaternary structure, the 20S proteasome core is composed of 14 alpha and 14 beta subunits that assemble into four stacked heptameric rings, resulting in a barrel-shaped structure. The two inner rings, each composed of seven catalytic beta subunits, are sandwiched by two outer rings, each composed of seven alpha subunits. The catalytic chamber with the active sites is on the inside of the barrel. Has a gated structure, the ends of the cylinder being occluded by the N-termini of the alpha-subunits. Is capped by the proteasome-associated ATPase, ARC.

It localises to the cytoplasm. It catalyses the reaction Cleavage of peptide bonds with very broad specificity.. Its pathway is protein degradation; proteasomal Pup-dependent pathway. Its activity is regulated as follows. The formation of the proteasomal ATPase ARC-20S proteasome complex, likely via the docking of the C-termini of ARC into the intersubunit pockets in the alpha-rings, may trigger opening of the gate for substrate entry. Interconversion between the open-gate and close-gate conformations leads to a dynamic regulation of the 20S proteasome proteolysis activity. Its function is as follows. Component of the proteasome core, a large protease complex with broad specificity involved in protein degradation. The chain is Proteasome subunit beta from Mycolicibacterium vanbaalenii (strain DSM 7251 / JCM 13017 / BCRC 16820 / KCTC 9966 / NRRL B-24157 / PYR-1) (Mycobacterium vanbaalenii).